Here is a 250-residue protein sequence, read N- to C-terminus: Large ribosomal subunit protein uL29m (250 aa).

Residues M1–C24 constitute a mitochondrion transit peptide. Residues V66–V86 form a disordered region.

This sequence belongs to the universal ribosomal protein uL29 family. As to quaternary structure, component of the mitochondrial large ribosomal subunit. Mature mitochondrial ribosomes consist of a small (37S) and a large (54S) subunit. The 37S subunit contains at least 33 different proteins and 1 molecule of RNA (15S). The 54S subunit contains at least 45 different proteins and 1 molecule of RNA (21S).

It is found in the mitochondrion. The protein is Large ribosomal subunit protein uL29m (MRPL4) of Phaeosphaeria nodorum (strain SN15 / ATCC MYA-4574 / FGSC 10173) (Glume blotch fungus).